We begin with the raw amino-acid sequence, 617 residues long: 1-deoxy-D-xylulose-5-phosphate synthase (617 aa).

Thiamine diphosphate-binding positions include H76 and 117–119 (GHS). Residue D148 participates in Mg(2+) binding. Thiamine diphosphate is bound by residues 149 to 150 (GA), N177, Y285, and E366. Residue N177 coordinates Mg(2+).

Belongs to the transketolase family. DXPS subfamily. Homodimer. Requires Mg(2+) as cofactor. Thiamine diphosphate serves as cofactor.

It catalyses the reaction D-glyceraldehyde 3-phosphate + pyruvate + H(+) = 1-deoxy-D-xylulose 5-phosphate + CO2. Its pathway is metabolic intermediate biosynthesis; 1-deoxy-D-xylulose 5-phosphate biosynthesis; 1-deoxy-D-xylulose 5-phosphate from D-glyceraldehyde 3-phosphate and pyruvate: step 1/1. Catalyzes the acyloin condensation reaction between C atoms 2 and 3 of pyruvate and glyceraldehyde 3-phosphate to yield 1-deoxy-D-xylulose-5-phosphate (DXP). The sequence is that of 1-deoxy-D-xylulose-5-phosphate synthase from Mannheimia succiniciproducens (strain KCTC 0769BP / MBEL55E).